A 365-amino-acid polypeptide reads, in one-letter code: Histidinol-phosphate aminotransferase (365 aa).

Positions 1–22 are disordered; it reads MSRPVPNPGILDIAPYTPGKSP. At Lys-221 the chain carries N6-(pyridoxal phosphate)lysine.

Belongs to the class-II pyridoxal-phosphate-dependent aminotransferase family. Histidinol-phosphate aminotransferase subfamily. Homodimer. Pyridoxal 5'-phosphate is required as a cofactor.

The catalysed reaction is L-histidinol phosphate + 2-oxoglutarate = 3-(imidazol-4-yl)-2-oxopropyl phosphate + L-glutamate. Its pathway is amino-acid biosynthesis; L-histidine biosynthesis; L-histidine from 5-phospho-alpha-D-ribose 1-diphosphate: step 7/9. The sequence is that of Histidinol-phosphate aminotransferase from Rhodopseudomonas palustris (strain BisA53).